The sequence spans 469 residues: Diaminopimelate decarboxylase (469 aa).

Positions 1 to 23 (MLSTEMPLPTTGSTLLKTPASPS) are disordered. N6-(pyridoxal phosphate)lysine is present on lysine 93. Residues glycine 279 and 321–324 (EPGR) contribute to the pyridoxal 5'-phosphate site. Substrate is bound by residues arginine 324, arginine 361, and tyrosine 365. Cysteine 392 acts as the Proton donor in catalysis. Substrate contacts are provided by glutamate 393 and tyrosine 421. Tyrosine 421 is a binding site for pyridoxal 5'-phosphate.

This sequence belongs to the Orn/Lys/Arg decarboxylase class-II family. LysA subfamily. In terms of assembly, homodimer. Pyridoxal 5'-phosphate serves as cofactor.

The enzyme catalyses meso-2,6-diaminopimelate + H(+) = L-lysine + CO2. The protein operates within amino-acid biosynthesis; L-lysine biosynthesis via DAP pathway; L-lysine from DL-2,6-diaminopimelate: step 1/1. Specifically catalyzes the decarboxylation of meso-diaminopimelate (meso-DAP) to L-lysine. This chain is Diaminopimelate decarboxylase, found in Synechocystis sp. (strain ATCC 27184 / PCC 6803 / Kazusa).